Here is a 206-residue protein sequence, read N- to C-terminus: Probable glutathione S-transferase 9 (206 aa).

In terms of domain architecture, GST N-terminal spans 2-79 (VSYKLIYFQS…YLSKQFGISG (78 aa)). Residues Y8, W39, K43, 49-51 (GQV), and 63-64 (QS) contribute to the glutathione site. A GST C-terminal domain is found at 81-206 (SSWEEAQVDA…WIEKRPVTSR (126 aa)).

It belongs to the GST superfamily. Sigma family.

The enzyme catalyses RX + glutathione = an S-substituted glutathione + a halide anion + H(+). Its function is as follows. Conjugation of reduced glutathione to a wide number of exogenous and endogenous hydrophobic electrophiles. The protein is Probable glutathione S-transferase 9 (gst-9) of Caenorhabditis elegans.